A 284-amino-acid polypeptide reads, in one-letter code: 4-hydroxy-3-methylbut-2-enyl diphosphate reductase (284 aa).

Cys12 provides a ligand contact to [4Fe-4S] cluster. (2E)-4-hydroxy-3-methylbut-2-enyl diphosphate contacts are provided by His40 and His76. Dimethylallyl diphosphate is bound by residues His40 and His76. Isopentenyl diphosphate-binding residues include His40 and His76. Cys98 provides a ligand contact to [4Fe-4S] cluster. Residue His126 participates in (2E)-4-hydroxy-3-methylbut-2-enyl diphosphate binding. A dimethylallyl diphosphate-binding site is contributed by His126. Residue His126 participates in isopentenyl diphosphate binding. Glu128 acts as the Proton donor in catalysis. Thr161 contributes to the (2E)-4-hydroxy-3-methylbut-2-enyl diphosphate binding site. [4Fe-4S] cluster is bound at residue Cys191. The (2E)-4-hydroxy-3-methylbut-2-enyl diphosphate site is built by Ser219, Ser220, Asn221, and Ser263. Positions 219, 220, 221, and 263 each coordinate dimethylallyl diphosphate. 4 residues coordinate isopentenyl diphosphate: Ser219, Ser220, Asn221, and Ser263.

It belongs to the IspH family. [4Fe-4S] cluster is required as a cofactor.

It carries out the reaction isopentenyl diphosphate + 2 oxidized [2Fe-2S]-[ferredoxin] + H2O = (2E)-4-hydroxy-3-methylbut-2-enyl diphosphate + 2 reduced [2Fe-2S]-[ferredoxin] + 2 H(+). The enzyme catalyses dimethylallyl diphosphate + 2 oxidized [2Fe-2S]-[ferredoxin] + H2O = (2E)-4-hydroxy-3-methylbut-2-enyl diphosphate + 2 reduced [2Fe-2S]-[ferredoxin] + 2 H(+). The protein operates within isoprenoid biosynthesis; dimethylallyl diphosphate biosynthesis; dimethylallyl diphosphate from (2E)-4-hydroxy-3-methylbutenyl diphosphate: step 1/1. Its pathway is isoprenoid biosynthesis; isopentenyl diphosphate biosynthesis via DXP pathway; isopentenyl diphosphate from 1-deoxy-D-xylulose 5-phosphate: step 6/6. Its function is as follows. Catalyzes the conversion of 1-hydroxy-2-methyl-2-(E)-butenyl 4-diphosphate (HMBPP) into a mixture of isopentenyl diphosphate (IPP) and dimethylallyl diphosphate (DMAPP). Acts in the terminal step of the DOXP/MEP pathway for isoprenoid precursor biosynthesis. In Petrotoga mobilis (strain DSM 10674 / SJ95), this protein is 4-hydroxy-3-methylbut-2-enyl diphosphate reductase.